A 289-amino-acid polypeptide reads, in one-letter code: 4-diphosphocytidyl-2-C-methyl-D-erythritol kinase (289 aa).

Residue Lys10 is part of the active site. An ATP-binding site is contributed by 94–104 (PVAAGLAGGSS). Asp136 is a catalytic residue.

The protein belongs to the GHMP kinase family. IspE subfamily.

The catalysed reaction is 4-CDP-2-C-methyl-D-erythritol + ATP = 4-CDP-2-C-methyl-D-erythritol 2-phosphate + ADP + H(+). It functions in the pathway isoprenoid biosynthesis; isopentenyl diphosphate biosynthesis via DXP pathway; isopentenyl diphosphate from 1-deoxy-D-xylulose 5-phosphate: step 3/6. Catalyzes the phosphorylation of the position 2 hydroxy group of 4-diphosphocytidyl-2C-methyl-D-erythritol. This Bacillus pumilus (strain SAFR-032) protein is 4-diphosphocytidyl-2-C-methyl-D-erythritol kinase.